Here is a 139-residue protein sequence, read N- to C-terminus: Thiosulfate:glutathione sulfurtransferase (139 aa).

Serine 26 is modified (phosphoserine). In terms of domain architecture, Rhodanese spans 37–138; the sequence is HDPNVVLVDV…WVSHGGDKLD (102 aa). Catalysis depends on cysteine 98, which acts as the Cysteine persulfide intermediate.

It localises to the mitochondrion. The catalysed reaction is thiosulfate + glutathione = S-sulfanylglutathione + sulfite + H(+). With respect to regulation, GSS(-) is a potent inhibitor of RDL1, since the presence of the sulfur dioxygenase strongly increases the RDL1 catalytic activity. Its function is as follows. Thiosulfate:glutathione sulfurtransferase (TST) required to produce S-sulfanylglutathione (GSS(-)), a central intermediate in hydrogen sulfide metabolism. Provides the link between the first step in H(2)S metabolism performed by the sulfide:quinone oxidoreductase (SQOR) which catalyzes the conversion of H(2)S to thiosulfate, and the sulfur dioxygenase (SDO) which uses GSS(-) as substrate. The thermodynamic coupling of the irreversible SDO and reversible TST reactions provides a model for the physiologically relevant reaction with thiosulfate as the sulfane donor. This chain is Thiosulfate:glutathione sulfurtransferase (RDL1), found in Saccharomyces cerevisiae (strain ATCC 204508 / S288c) (Baker's yeast).